The chain runs to 127 residues: Small ribosomal subunit protein bS6 (127 aa).

The segment at 99–127 (PLPAPRVVPGSEPAAAPQEQPAANSEAAS) is disordered. Over residues 109 to 127 (SEPAAAPQEQPAANSEAAS) the composition is skewed to low complexity.

This sequence belongs to the bacterial ribosomal protein bS6 family.

Its function is as follows. Binds together with bS18 to 16S ribosomal RNA. This Parasynechococcus marenigrum (strain WH8102) protein is Small ribosomal subunit protein bS6.